A 349-amino-acid chain; its full sequence is Anthranilate phosphoribosyltransferase (349 aa).

5-phospho-alpha-D-ribose 1-diphosphate-binding positions include Gly86, 89–90 (GD), Thr94, 96–99 (NIST), 114–122 (KHGNKSASG), and Ser126. Position 86 (Gly86) interacts with anthranilate. Ser98 provides a ligand contact to Mg(2+). Asn117 provides a ligand contact to anthranilate. Anthranilate is bound at residue Arg172. Positions 231 and 232 each coordinate Mg(2+).

This sequence belongs to the anthranilate phosphoribosyltransferase family. Homodimer. Mg(2+) serves as cofactor.

It carries out the reaction N-(5-phospho-beta-D-ribosyl)anthranilate + diphosphate = 5-phospho-alpha-D-ribose 1-diphosphate + anthranilate. It participates in amino-acid biosynthesis; L-tryptophan biosynthesis; L-tryptophan from chorismate: step 2/5. Functionally, catalyzes the transfer of the phosphoribosyl group of 5-phosphorylribose-1-pyrophosphate (PRPP) to anthranilate to yield N-(5'-phosphoribosyl)-anthranilate (PRA). The sequence is that of Anthranilate phosphoribosyltransferase from Prochlorococcus marinus (strain MIT 9312).